A 273-amino-acid polypeptide reads, in one-letter code: MSGMHGASREALAAARERLDALTDSTSVDAGSLADELAAVTALLHREVSLRRVLTDPAQSARPRPSSPSVSSAPRSAAPVDLVAGTVRSRWSQSRDLVDALEQLANIADLTAAQKRGRLDNVEDELFRFGRIISSNTELRAALTSRSATTAAKSELLAGLLGSRAERTTERLVTRLVTAPRGRSLESGLESLSKLAADRRDRMVAVVTSAVPLSDTQKQRLGAALAKVYGRPMHLNLDVDPEVLGGIRVQVGDEVINGSIADRLEDAGRRLAS.

Positions 55 to 78 (TDPAQSARPRPSSPSVSSAPRSAA) are disordered. Over residues 57–78 (PAQSARPRPSSPSVSSAPRSAA) the composition is skewed to low complexity.

The protein belongs to the ATPase delta chain family. F-type ATPases have 2 components, F(1) - the catalytic core - and F(0) - the membrane proton channel. F(1) has five subunits: alpha(3), beta(3), gamma(1), delta(1), epsilon(1). F(0) has three main subunits: a(1), b(2) and c(10-14). The alpha and beta chains form an alternating ring which encloses part of the gamma chain. F(1) is attached to F(0) by a central stalk formed by the gamma and epsilon chains, while a peripheral stalk is formed by the delta and b chains.

It is found in the cell membrane. In terms of biological role, f(1)F(0) ATP synthase produces ATP from ADP in the presence of a proton or sodium gradient. F-type ATPases consist of two structural domains, F(1) containing the extramembraneous catalytic core and F(0) containing the membrane proton channel, linked together by a central stalk and a peripheral stalk. During catalysis, ATP synthesis in the catalytic domain of F(1) is coupled via a rotary mechanism of the central stalk subunits to proton translocation. Functionally, this protein is part of the stalk that links CF(0) to CF(1). It either transmits conformational changes from CF(0) to CF(1) or is implicated in proton conduction. This is ATP synthase subunit delta from Streptomyces lividans.